The chain runs to 155 residues: Gastrin-releasing peptide (155 aa).

The N-terminal stretch at 1–31 (MEGVLLFWKYRALFFLVLCSLVLCKVHLSQA) is a signal peptide. Met60 carries the methionine amide modification. The propeptide occupies 128–155 (FSGAEDNNLKEMLDYLYQMMNMKENTSS).

It belongs to the bombesin/neuromedin-B/ranatensin family. In terms of tissue distribution, brain and stomach. In the stomach GRP was localized, at the base of the gastric pits, to occasional cells whose distribution and appearance were consistent with that of gut neuroendocrine cells.

It localises to the secreted. Its subcellular location is the cytoplasmic vesicle. The protein localises to the secretory vesicle lumen. Stimulates the release of gastrin and other gastrointestinal hormones. The polypeptide is Gastrin-releasing peptide (grp) (Bombina orientalis (Oriental fire-bellied toad)).